We begin with the raw amino-acid sequence, 891 residues long: Longitudinals lacking protein, isoform G (891 aa).

A BTB domain is found at 32-97; the sequence is VDCTLAAEGK…MYRGEVNISQ (66 aa). Disordered regions lie at residues 115-200 and 228-340; these read LSDN…SSVL and SSGP…ASAS. At Ser140 the chain carries Phosphoserine. Thr161 carries the post-translational modification Phosphothreonine. Phosphoserine occurs at positions 162 and 168. 4 stretches are compositionally biased toward low complexity: residues 162–175, 228–251, 263–293, and 329–340; these read SGDV…SSSP, SSGP…LTST, TSST…QTTS, and NSATGPNPASAS. Phosphoserine occurs at positions 372, 375, and 378. Residues 446–467 are disordered; sequence QDAQQRDPQDLSRKENTAPDVA. Over residues 449–462 the composition is skewed to basic and acidic residues; sequence QQRDPQDLSRKENT. Phosphoserine is present on residues Ser696 and Ser705. Position 706 is a phosphothreonine (Thr706). A phosphoserine mark is found at Ser749 and Ser750. Residues 791 to 813 form a C2H2-type 1; degenerate zinc finger; it reads YECRHCGKKYRWKSTLRRHENVE. Residues 821–843 form a C2H2-type 2 zinc finger; sequence HQCPYCPYKSKQRGNLGVHVRKH. Positions 840-891 are disordered; it reads VRKHHTDLPQLPSKRRSKYSMNRENGMSGSMSDDSQGKLIIDFNGKGELETK. Ser874 carries the phosphoserine modification.

In terms of tissue distribution, expressed in both mesoderm and ectoderm with expression highest in the mesectoderm by stage 11. Becomes enriched in a cluster of brain cells, in abdominal histoblasts, and in the embryonic imaginal disks during later stages.

Its subcellular location is the nucleus. Its function is as follows. Putative transcription factor required for axon growth and guidance in the central and peripheral nervous systems. Repels CNS axons away from the midline by promoting the expression of the midline repellent sli and its receptor robo. In Drosophila melanogaster (Fruit fly), this protein is Longitudinals lacking protein, isoform G.